The chain runs to 323 residues: Fructose-1,6-bisphosphatase class 1 (323 aa).

Residues glutamate 88, aspartate 107, leucine 109, and aspartate 110 each contribute to the Mg(2+) site. Residues 110 to 113 and asparagine 200 contribute to the substrate site; that span reads DGSS. Residue glutamate 272 coordinates Mg(2+).

This sequence belongs to the FBPase class 1 family. As to quaternary structure, homotetramer. Mg(2+) is required as a cofactor.

The protein localises to the cytoplasm. The catalysed reaction is beta-D-fructose 1,6-bisphosphate + H2O = beta-D-fructose 6-phosphate + phosphate. The protein operates within carbohydrate biosynthesis; gluconeogenesis. This chain is Fructose-1,6-bisphosphatase class 1, found in Acinetobacter baumannii (strain AYE).